A 107-amino-acid polypeptide reads, in one-letter code: Putative double-stranded DNA mimic protein PC1_1990 (107 aa).

It belongs to the putative dsDNA mimic protein family.

Functionally, may act as a double-stranded DNA (dsDNA) mimic. Probably regulates the activity of a dsDNA-binding protein. In Pectobacterium carotovorum subsp. carotovorum (strain PC1), this protein is Putative double-stranded DNA mimic protein PC1_1990.